Reading from the N-terminus, the 363-residue chain is Guanine nucleotide-binding protein alpha-11 subunit (363 aa).

One can recognise a G-alpha domain in the interval 26-363; the sequence is KMLKILLLGG…KISMEKVGFM (338 aa). A G1 motif region spans residues 29-42; the sequence is KILLLGGPECGKST. Residues 34–41, 172–178, 197–201, 276–279, and Ala-335 each bind GTP; these read GGPECGKS, LRARVPT, DVGGQ, and NKID. The Mg(2+) site is built by Ser-41 and Thr-178. Residues 170-178 form a G2 motif region; the sequence is DVLRARVPT. The segment at 193 to 202 is G3 motif; it reads LRMVDVGGQR. Residues 272–279 form a G4 motif region; the sequence is ILFLNKID. The segment at 333 to 338 is G5 motif; sequence TNATDT.

This sequence belongs to the G-alpha family. As to quaternary structure, g proteins are composed of 3 units; alpha, beta and gamma. The alpha chain contains the guanine nucleotide binding site. In terms of tissue distribution, expressed in ADL and ASH neurons.

In terms of biological role, guanine nucleotide-binding proteins (G proteins) are involved as modulators or transducers in various transmembrane signaling systems. Mediates the transduction of food and serotonin signals, which modulates the avoidance response to the odorant octanol. Has a role in lifespan to promote longevity. The protein is Guanine nucleotide-binding protein alpha-11 subunit (gpa-11) of Caenorhabditis elegans.